Here is a 908-residue protein sequence, read N- to C-terminus: MAEVTVSELAKSVGAPVERILSQMQQAGLTHQSPDDVVSDEEKQKLLTFLKSSHGETVAEPKKITLKRKTTTTLKTGSGSGRKTVNVEVRKKRTYVKRDEVADEIEESAAVAEAEVAKVEEPVVEPVQEPEVAAEPEVVEAPEPEPVVEAIEEAPVEEPAAPAAPVISQTTTASSLVDDAEEMRIRAASARIKAEEERLAAIEKARKEKAAKPAPAPGPAAAAKEDARPTKHVEDLAKLKKPHDKKDEEFDEDGKKHNKKAGKAVKKVAGPKKVASALDYVEDKEEIEEVIHAPKPKRLSANRGPRPVIKVSNKHGFKKPTGKITYDVEIPETITVGELAQRMNVKAGEVVKCLMKMGTMATVNQPIDQETAQLVVEELGHKAVLISADAIEIKLQEEVAANVDGETIPRAPIVTVMGHVDHGKTSLLDYIRKAKVASGEAGGITQHIGAYRVQTSHGELTFLDTPGHAAFTAMRARGAQCTDVVILVVAADDGVMPQTEEAVQHARAAGVPLVVAINKMDKESADPDRVKNELSAKEVIPEDWGGDTQFIEVSAHTGQGIEELLEAVALQAELLELSAPKDVPARGVVVESRMDKGRGVVATVLVQGGDLKSGDILLAGQSFGRVRAMTNEFGEQVKTAGPSSPVEILGLDTPPQAGDEFLVVPDERKAREVAEFRAERERQEKLQRQQAAKLENMFAGIGENETKVLSVVLKTDVRGSLEAIQAALLDIGNDEVQVNIVGGGVGGITGNDVNLALTTGAIVLGFNVRADASARKLAETESIEIRYYSIIYQLIDEVKSALSGMLDPERVEEIVGIAEVRETFRSPKFGQVAGCMVVEGSVHRNKPIRVLRENVVIFEGELESLRRFKDDVSEVRNGTECGIGVKNYDVKVGDQIEVFDVKEVAREL.

Disordered stretches follow at residues 122–180 and 203–267; these read PVVE…VDDA and EKAR…AVKK. The segment covering 132–143 has biased composition (acidic residues); the sequence is VAAEPEVVEAPE. Residues 157 to 166 show a composition bias toward low complexity; that stretch reads EEPAAPAAPV. Residues 223–248 show a composition bias toward basic and acidic residues; that stretch reads AKEDARPTKHVEDLAKLKKPHDKKDE. A compositionally biased stretch (basic residues) spans 256–267; sequence KHNKKAGKAVKK. The tr-type G domain occupies 409-578; sequence PRAPIVTVMG…ALQAELLELS (170 aa). Residues 418–425 form a G1 region; that stretch reads GHVDHGKT. 418–425 contacts GTP; that stretch reads GHVDHGKT. Residues 443 to 447 form a G2 region; it reads GITQH. The segment at 464 to 467 is G3; the sequence is DTPG. Residues 464 to 468 and 518 to 521 each bind GTP; these read DTPGH and NKMD. Residues 518–521 form a G4 region; the sequence is NKMD. Positions 554–556 are G5; that stretch reads SAH.

Belongs to the TRAFAC class translation factor GTPase superfamily. Classic translation factor GTPase family. IF-2 subfamily.

The protein localises to the cytoplasm. Functionally, one of the essential components for the initiation of protein synthesis. Protects formylmethionyl-tRNA from spontaneous hydrolysis and promotes its binding to the 30S ribosomal subunits. Also involved in the hydrolysis of GTP during the formation of the 70S ribosomal complex. In Saccharophagus degradans (strain 2-40 / ATCC 43961 / DSM 17024), this protein is Translation initiation factor IF-2.